The following is a 419-amino-acid chain: Probable 3-isopropylmalate dehydratase large subunit (419 aa).

3 residues coordinate [4Fe-4S] cluster: C299, C359, and C362.

Belongs to the aconitase/IPM isomerase family. LeuC type 2 subfamily. As to quaternary structure, heterodimer of LeuC and LeuD. Requires [4Fe-4S] cluster as cofactor.

The catalysed reaction is (2R,3S)-3-isopropylmalate = (2S)-2-isopropylmalate. It participates in amino-acid biosynthesis; L-leucine biosynthesis; L-leucine from 3-methyl-2-oxobutanoate: step 2/4. Its function is as follows. Catalyzes the isomerization between 2-isopropylmalate and 3-isopropylmalate, via the formation of 2-isopropylmaleate. The protein is Probable 3-isopropylmalate dehydratase large subunit of Methanothermobacter thermautotrophicus (strain ATCC 29096 / DSM 1053 / JCM 10044 / NBRC 100330 / Delta H) (Methanobacterium thermoautotrophicum).